The chain runs to 323 residues: Beta-ketoacyl-[acyl-carrier-protein] synthase III (323 aa).

Active-site residues include cysteine 113 and histidine 250. An ACP-binding region spans residues 251–255; that stretch reads QANKR. Residue asparagine 280 is part of the active site.

Belongs to the thiolase-like superfamily. FabH family. In terms of assembly, homodimer.

The protein resides in the cytoplasm. The enzyme catalyses malonyl-[ACP] + acetyl-CoA + H(+) = 3-oxobutanoyl-[ACP] + CO2 + CoA. Its pathway is lipid metabolism; fatty acid biosynthesis. Catalyzes the condensation reaction of fatty acid synthesis by the addition to an acyl acceptor of two carbons from malonyl-ACP. Catalyzes the first condensation reaction which initiates fatty acid synthesis and may therefore play a role in governing the total rate of fatty acid production. Possesses both acetoacetyl-ACP synthase and acetyl transacylase activities. Its substrate specificity determines the biosynthesis of branched-chain and/or straight-chain of fatty acids. This is Beta-ketoacyl-[acyl-carrier-protein] synthase III from Brucella abortus biovar 1 (strain 9-941).